Here is a 627-residue protein sequence, read N- to C-terminus: tRNA uridine 5-carboxymethylaminomethyl modification enzyme MnmG (627 aa).

FAD is bound by residues 13 to 18 (GGGHAG), Val125, and Ser180. Residue 274–288 (GPRYCPSIEDKVVRF) coordinates NAD(+). Gln371 contacts FAD.

The protein belongs to the MnmG family. In terms of assembly, homodimer. Heterotetramer of two MnmE and two MnmG subunits. The cofactor is FAD.

Its subcellular location is the cytoplasm. Functionally, NAD-binding protein involved in the addition of a carboxymethylaminomethyl (cmnm) group at the wobble position (U34) of certain tRNAs, forming tRNA-cmnm(5)s(2)U34. The sequence is that of tRNA uridine 5-carboxymethylaminomethyl modification enzyme MnmG from Francisella philomiragia subsp. philomiragia (strain ATCC 25017 / CCUG 19701 / FSC 153 / O#319-036).